The primary structure comprises 31 residues: MLTIISYFGFLFGALTLALILFIGLNKIQLI.

A helical transmembrane segment spans residues Ile4–Gly24.

This sequence belongs to the PetL family. As to quaternary structure, the 4 large subunits of the cytochrome b6-f complex are cytochrome b6, subunit IV (17 kDa polypeptide, PetD), cytochrome f and the Rieske protein, while the 4 small subunits are PetG, PetL, PetM and PetN. The complex functions as a dimer.

The protein localises to the plastid. It is found in the chloroplast thylakoid membrane. Component of the cytochrome b6-f complex, which mediates electron transfer between photosystem II (PSII) and photosystem I (PSI), cyclic electron flow around PSI, and state transitions. PetL is important for photoautotrophic growth as well as for electron transfer efficiency and stability of the cytochrome b6-f complex. This Physcomitrium patens (Spreading-leaved earth moss) protein is Cytochrome b6-f complex subunit 6.